The sequence spans 143 residues: Probable cyclic pyranopterin monophosphate synthase (143 aa).

Substrate-binding positions include 61–63 (MCH) and 97–98 (ME). D112 is an active-site residue.

It belongs to the MoaC family. As to quaternary structure, homohexamer; trimer of dimers.

The enzyme catalyses (8S)-3',8-cyclo-7,8-dihydroguanosine 5'-triphosphate = cyclic pyranopterin phosphate + diphosphate. It functions in the pathway cofactor biosynthesis; molybdopterin biosynthesis. Its function is as follows. Catalyzes the conversion of (8S)-3',8-cyclo-7,8-dihydroguanosine 5'-triphosphate to cyclic pyranopterin monophosphate (cPMP). The protein is Probable cyclic pyranopterin monophosphate synthase of Sulfolobus acidocaldarius (strain ATCC 33909 / DSM 639 / JCM 8929 / NBRC 15157 / NCIMB 11770).